Reading from the N-terminus, the 892-residue chain is Microsomal triglyceride transfer protein homolog (892 aa).

Positions 1-19 are cleaved as a signal peptide; sequence MFSSRIWLLLAVTVGVCLA.

Heterodimer; heterodimerizes with protein disulfide isomerase.

It is found in the endoplasmic reticulum. Its function is as follows. Catalyzes the transport of cholesteryl ester, and phospholipid between phospholipid surfaces. Does not catalyze transport of triglycerides. Required for the assembly and secretion of plasma lipoproteins that contain apolipoprotein B. Required for normal expression of klf-3. This Caenorhabditis elegans protein is Microsomal triglyceride transfer protein homolog.